The chain runs to 38 residues: Photosystem II reaction center protein L (38 aa).

A helical membrane pass occupies residues 17-37 (SLYWGLLLIFVLAVLFSNYFF).

This sequence belongs to the PsbL family. As to quaternary structure, PSII is composed of 1 copy each of membrane proteins PsbA, PsbB, PsbC, PsbD, PsbE, PsbF, PsbH, PsbI, PsbJ, PsbK, PsbL, PsbM, PsbT, PsbX, PsbY, PsbZ, Psb30/Ycf12, at least 3 peripheral proteins of the oxygen-evolving complex and a large number of cofactors. It forms dimeric complexes.

Its subcellular location is the plastid. It localises to the chloroplast thylakoid membrane. Its function is as follows. One of the components of the core complex of photosystem II (PSII). PSII is a light-driven water:plastoquinone oxidoreductase that uses light energy to abstract electrons from H(2)O, generating O(2) and a proton gradient subsequently used for ATP formation. It consists of a core antenna complex that captures photons, and an electron transfer chain that converts photonic excitation into a charge separation. This subunit is found at the monomer-monomer interface and is required for correct PSII assembly and/or dimerization. The protein is Photosystem II reaction center protein L of Adiantum capillus-veneris (Maidenhair fern).